We begin with the raw amino-acid sequence, 103 residues long: Pro-corazonin (103 aa).

The N-terminal stretch at Met-1 to Ala-19 is a signal peptide. Residue Gln-20 is modified to Pyrrolidone carboxylic acid. Residue Asn-30 is modified to Asparagine amide. The propeptide occupies Asp-34 to Tyr-103.

In terms of tissue distribution, expressed in corpora cardiaca (CC), corpora allata (CA), antennal lobe (AL) and gnathal ganglion (GNG) (at protein level). Expression in CC and CA detected in all animals, expression in AL and in GNG in some animals.

The protein resides in the secreted. Functionally, cardioactive peptide. Corazonin is probably involved in the physiological regulation of the heart beat. The protein is Pro-corazonin of Agrotis ipsilon (Black cutworm moth).